Reading from the N-terminus, the 253-residue chain is Phycocyanobilin:ferredoxin oxidoreductase (253 aa).

The protein belongs to the HY2 family.

It carries out the reaction (2R,3Z)-phycocyanobilin + 4 oxidized [2Fe-2S]-[ferredoxin] = biliverdin IXalpha + 4 reduced [2Fe-2S]-[ferredoxin] + 4 H(+). In terms of biological role, catalyzes the four-electron reduction of biliverdin IX-alpha (2-electron reduction at both the A and D rings); the reaction proceeds via an isolatable 2-electron intermediate, 181,182-dihydrobiliverdin. In Gloeobacter violaceus (strain ATCC 29082 / PCC 7421), this protein is Phycocyanobilin:ferredoxin oxidoreductase (pcyA).